We begin with the raw amino-acid sequence, 202 residues long: Recoverin (202 aa).

Gly2 is lipidated: N-myristoyl glycine. A Cysteine sulfenic acid (-SOH) modification is found at Cys39. 4 consecutive EF-hand domains span residues 41–59 (SGRI…FFPD), 61–96 (DPKA…TTAG), 97–132 (KPTQ…IFKM), and 147–182 (TPEK…NKEI). The Ca(2+) site is built by Asp74, Asn76, Asp78, Thr80, Glu85, Asp110, Asp112, Asn114, Thr116, and Glu121. The interaction with GRK1 stretch occupies residues 189 to 192 (EPQK).

Belongs to the recoverin family. In terms of assembly, homodimer; disulfide-linked. Homodimerization is caused by prolonged intense illumination. May form a complex composed of RHO, GRK1 and RCVRN in a Ca(2+)-dependent manner; RCVRN prevents the interaction between GRK1 and RHO. Interacts (via C-terminus) with GRK1 (via N-terminus); the interaction is Ca(2+)-dependent. The N-terminal glycine is linked to one of four different types of acyl groups. The most abundant is myristoleate (14:1), but 14:0, 14:2, and 12:0 acyl residues are also present. The Ca(2+) induced exposure of the myristoyl group, known as the calcium-myristoyl switch, promotes RCVRN binding to the photoreceptor cell membranes only when intracellular Ca(2+) concentration is high. In terms of processing, oxidation on Cys-39 occurs in response to prolonged intense illumination and results in the formation of disulfide homodimers, and to a lesser extent disulfide-linked heterodimers. As to expression, expressed in rod photoreceptors in the retina (at protein level).

The protein localises to the photoreceptor inner segment. It is found in the cell projection. Its subcellular location is the cilium. The protein resides in the photoreceptor outer segment. It localises to the photoreceptor outer segment membrane. The protein localises to the perikaryon. Its function is as follows. Acts as a calcium sensor and regulates phototransduction of cone and rod photoreceptor cells. Modulates light sensitivity of cone photoreceptor in dark and dim conditions. In response to high Ca(2+) levels induced by low light levels, prolongs RHO/rhodopsin activation in rod photoreceptor cells by binding to and inhibiting GRK1-mediated phosphorylation of RHO/rhodopsin. Plays a role in scotopic vision/enhances vision in dim light by enhancing signal transfer between rod photoreceptors and rod bipolar cells. Improves rod photoreceptor sensitivity in dim light and mediates response of rod photoreceptors to facilitate detection of change and motion in bright light. The sequence is that of Recoverin (Rcvrn) from Mus musculus (Mouse).